The chain runs to 1217 residues: ATP-dependent helicase/nuclease subunit A (1217 aa).

One can recognise a UvrD-like helicase ATP-binding domain in the interval 10-475 (VIWTDAQWQS…MDLSQNFRSR (466 aa)). Residue 31 to 38 (AAAGSGKT) coordinates ATP. The 296-residue stretch at 491–786 (DEQVGEVNYD…RMMTIHSSKG (296 aa)) folds into the UvrD-like helicase C-terminal domain.

The protein belongs to the helicase family. AddA subfamily. As to quaternary structure, heterodimer of AddA and AddB/RexB. Mg(2+) is required as a cofactor.

The enzyme catalyses Couples ATP hydrolysis with the unwinding of duplex DNA by translocating in the 3'-5' direction.. It carries out the reaction ATP + H2O = ADP + phosphate + H(+). The heterodimer acts as both an ATP-dependent DNA helicase and an ATP-dependent, dual-direction single-stranded exonuclease. Recognizes the chi site generating a DNA molecule suitable for the initiation of homologous recombination. The AddA nuclease domain is required for chi fragment generation; this subunit has the helicase and 3' -&gt; 5' nuclease activities. The sequence is that of ATP-dependent helicase/nuclease subunit A from Staphylococcus aureus (strain bovine RF122 / ET3-1).